A 394-amino-acid polypeptide reads, in one-letter code: Protein-glutamate methylesterase/protein-glutamine glutaminase 2 (394 aa).

A Response regulatory domain is found at 4-121 (KVLVVDDSSF…ARNRDEAISL (118 aa)). At aspartate 55 the chain carries 4-aspartylphosphate. Residues 202–394 (SGKKYQLMAI…AERILVEVGR (193 aa)) form the CheB-type methylesterase domain. Residues serine 214, histidine 241, and aspartate 337 contribute to the active site.

This sequence belongs to the CheB family. In terms of processing, phosphorylated by CheA. Phosphorylation of the N-terminal regulatory domain activates the methylesterase activity.

The protein resides in the cytoplasm. It catalyses the reaction [protein]-L-glutamate 5-O-methyl ester + H2O = L-glutamyl-[protein] + methanol + H(+). The enzyme catalyses L-glutaminyl-[protein] + H2O = L-glutamyl-[protein] + NH4(+). Involved in chemotaxis. Part of a chemotaxis signal transduction system that modulates chemotaxis in response to various stimuli. Catalyzes the demethylation of specific methylglutamate residues introduced into the chemoreceptors (methyl-accepting chemotaxis proteins or MCP) by CheR. Also mediates the irreversible deamidation of specific glutamine residues to glutamic acid. The chain is Protein-glutamate methylesterase/protein-glutamine glutaminase 2 from Photobacterium profundum (strain SS9).